A 515-amino-acid polypeptide reads, in one-letter code: Maturase K (515 aa).

Belongs to the intron maturase 2 family. MatK subfamily.

The protein resides in the plastid. It is found in the chloroplast. In terms of biological role, usually encoded in the trnK tRNA gene intron. Probably assists in splicing its own and other chloroplast group II introns. The polypeptide is Maturase K (Pinus pumila (Dwarf Siberian pine)).